Consider the following 369-residue polypeptide: Anhydro-N-acetylmuramic acid kinase (369 aa).

Glycine 11–aspartate 18 contributes to the ATP binding site.

This sequence belongs to the anhydro-N-acetylmuramic acid kinase family.

The enzyme catalyses 1,6-anhydro-N-acetyl-beta-muramate + ATP + H2O = N-acetyl-D-muramate 6-phosphate + ADP + H(+). It functions in the pathway amino-sugar metabolism; 1,6-anhydro-N-acetylmuramate degradation. It participates in cell wall biogenesis; peptidoglycan recycling. Functionally, catalyzes the specific phosphorylation of 1,6-anhydro-N-acetylmuramic acid (anhMurNAc) with the simultaneous cleavage of the 1,6-anhydro ring, generating MurNAc-6-P. Is required for the utilization of anhMurNAc either imported from the medium or derived from its own cell wall murein, and thus plays a role in cell wall recycling. The sequence is that of Anhydro-N-acetylmuramic acid kinase from Idiomarina loihiensis (strain ATCC BAA-735 / DSM 15497 / L2-TR).